A 547-amino-acid polypeptide reads, in one-letter code: Chaperonin GroEL (547 aa).

Residues 30-33 (TLGP), lysine 51, 87-91 (DGTTT), glycine 415, 479-481 (NAA), and aspartate 495 each bind ATP.

The protein belongs to the chaperonin (HSP60) family. Forms a cylinder of 14 subunits composed of two heptameric rings stacked back-to-back. Interacts with the co-chaperonin GroES.

The protein resides in the cytoplasm. The catalysed reaction is ATP + H2O + a folded polypeptide = ADP + phosphate + an unfolded polypeptide.. In terms of biological role, together with its co-chaperonin GroES, plays an essential role in assisting protein folding. The GroEL-GroES system forms a nano-cage that allows encapsulation of the non-native substrate proteins and provides a physical environment optimized to promote and accelerate protein folding. The protein is Chaperonin GroEL of Pseudomonas putida (strain GB-1).